Reading from the N-terminus, the 300-residue chain is MDGILNINKPFGITSFDVVAKVRRIYSQKRVGHGGTLDPYATGVIPVFLGRSTRLIEYLSSVSKTYLAEIELGVETDSYDSEGEITFRKTCDYVTREMIYKTLMDFQGEIIQIPPMYSAVKHRGMRLYNLARQGIEVERIPRVATIYGIELLNYTSPVLRVRIECGHGTYIRSLAFDLGRKLGCGAYLKSLVREAYGQFNLANSLDFADLEAAKCDGKLAGILLPLETAIGHLPRVSLDEKNITRLVNGLEITLDRIDKPEAVAVYNAENSFVAIIQPETDGTWHPAKVFIRQSPKPDAN.

Aspartate 38 serves as the catalytic Nucleophile.

The protein belongs to the pseudouridine synthase TruB family. Type 1 subfamily.

The catalysed reaction is uridine(55) in tRNA = pseudouridine(55) in tRNA. Functionally, responsible for synthesis of pseudouridine from uracil-55 in the psi GC loop of transfer RNAs. In Dehalococcoides mccartyi (strain CBDB1), this protein is tRNA pseudouridine synthase B.